A 592-amino-acid polypeptide reads, in one-letter code: Cytosolic purine 5'-nucleotidase (592 aa).

A compositionally biased stretch (low complexity) spans 1 to 15 (MAENNNNNNNNNNNN). The disordered stretch occupies residues 1 to 37 (MAENNNNNNNNNNNNVSTPPHQKPHLTTGLRTSSSGL). Asp122 acts as the Nucleophile in catalysis. IMP-binding residues include Asp122 and Asp124. Residues Asp122 and Asp124 each coordinate Mg(2+). Residue Asp124 is the Proton donor of the active site. Residue Asn226 participates in ATP binding. Residues 252–273 (LTEEVADEQQQMNSPPLSSLGS) form a disordered region. The span at 259–273 (EQQQMNSPPLSSLGS) shows a compositional bias: polar residues. Arg299, Asp303, Lys312, Thr347, Asn348, Ser349, and Lys385 together coordinate IMP. Asp444 serves as a coordination point for Mg(2+). The ATP site is built by Gln547 and Arg550.

It belongs to the 5'(3')-deoxyribonucleotidase family. As to quaternary structure, homotetramer. Requires Mg(2+) as cofactor.

Its subcellular location is the cytoplasm. The protein localises to the cytosol. It carries out the reaction a ribonucleoside 5'-phosphate + H2O = a ribonucleoside + phosphate. The catalysed reaction is a 2'-deoxyribonucleoside + a ribonucleoside 5'-phosphate = a ribonucleoside + a 2'-deoxyribonucleoside 5'-phosphate. Its function is as follows. Broad specificity cytosolic 5'-nucleotidase that catalyzes the dephosphorylation of 6-hydroxypurine nucleoside 5'-monophosphates. In addition, possesses a phosphotransferase activity by which it can transfer a phosphate from a donor nucleoside monophosphate to an acceptor nucleoside. Through these activities regulates the purine nucleoside/nucleotide pools within the cell. The protein is Cytosolic purine 5'-nucleotidase (nt5c2) of Dictyostelium discoideum (Social amoeba).